A 476-amino-acid chain; its full sequence is MKILHASAEYFPYTKMGGLADMLASLTKEQSRTEEVYVALPLIGKLGKEPNWTGKEVGALLPQDAKEETIAVSLLAKARFREAIESGVKLYFFDSELFSGLNSIYGQADEHYRFAIFSYACYALSQILQVDVFHAHDWHTALSLTLQKNSTKPIPSLFTIHNLAYQGDHPFWMTGFLKEDPFYLITSPFDQDGKCNYMKAGILSAGQITTVSPGYREETLREPNGFGLSYVLKKRKADYTGILNGIDPDEWNPKVDKRIFQTYHLQNWKEGKRKNKEHLYREIGRPNVSLDLPLIGLIGRLTYQKGFPTFLQAFLERRHLPHRYVVLGSGDPETENAFFHLSDMMPDVFYFYKGYNESLAHQIEAASDFFLMPSLFEPCGLNQMYSHVYGTIPIVSRVGGLRDTVDESIDIQFKTGIVFEPNDKSSLGYALERANDLFVSPERDHVVKNMMNLDWTWTKRKLEYDRVYKIAIELLE.

Lys15 lines the ADP-alpha-D-glucose pocket.

This sequence belongs to the glycosyltransferase 1 family. Bacterial/plant glycogen synthase subfamily.

The enzyme catalyses [(1-&gt;4)-alpha-D-glucosyl](n) + ADP-alpha-D-glucose = [(1-&gt;4)-alpha-D-glucosyl](n+1) + ADP + H(+). It participates in glycan biosynthesis; glycogen biosynthesis. Synthesizes alpha-1,4-glucan chains using ADP-glucose. The polypeptide is Glycogen synthase (Leptospira biflexa serovar Patoc (strain Patoc 1 / Ames)).